The following is a 241-amino-acid chain: Fatty acid metabolism regulator protein (241 aa).

Residues 11–79 form the HTH gntR-type domain; that stretch reads QSPAGLAEEY…HGKPTKVNNI (69 aa). A DNA-binding region (H-T-H motif) is located at residues 39 to 58; it reads ERELAEKIGVTRTTLREVLQ.

In terms of assembly, homodimer.

The protein localises to the cytoplasm. Functionally, multifunctional regulator of fatty acid metabolism. The protein is Fatty acid metabolism regulator protein of Pasteurella multocida (strain Pm70).